The chain runs to 144 residues: 3-hydroxyacyl-[acyl-carrier-protein] dehydratase FabZ (144 aa).

H47 is an active-site residue.

It belongs to the thioester dehydratase family. FabZ subfamily.

It is found in the cytoplasm. It carries out the reaction a (3R)-hydroxyacyl-[ACP] = a (2E)-enoyl-[ACP] + H2O. Functionally, involved in unsaturated fatty acids biosynthesis. Catalyzes the dehydration of short chain beta-hydroxyacyl-ACPs and long chain saturated and unsaturated beta-hydroxyacyl-ACPs. This is 3-hydroxyacyl-[acyl-carrier-protein] dehydratase FabZ from Alcanivorax borkumensis (strain ATCC 700651 / DSM 11573 / NCIMB 13689 / SK2).